Reading from the N-terminus, the 519-residue chain is Iroquois-class homeodomain protein IRX-4 (519 aa).

A DNA-binding region (homeobox; TALE-type) is located at residues 143-204 (GTRRKNATRE…NARRRLKKEN (62 aa)). The interval 204 to 298 (NKMTWPPRNK…VPAAPDGPVK (95 aa)) is disordered. Residues 213–222 (KCADEKRPYA) show a composition bias toward basic and acidic residues. 2 stretches are compositionally biased toward acidic residues: residues 223 to 235 (EGEE…EEAR) and 257 to 267 (LSDLDDFDPLE).

The protein belongs to the TALE/IRO homeobox family. In terms of assembly, interacts with the vitamin D receptor VDR but doesn't affect its transactivation activity. Predominantly expressed in cardiac ventricles.

The protein localises to the nucleus. Its function is as follows. Likely to be an important mediator of ventricular differentiation during cardiac development. The polypeptide is Iroquois-class homeodomain protein IRX-4 (IRX4) (Homo sapiens (Human)).